We begin with the raw amino-acid sequence, 661 residues long: Ubiquitin carboxyl-terminal hydrolase 25 (661 aa).

One can recognise a USP domain in the interval 24–335 (LGLRNLGNTC…KAYILFFSRS (312 aa)). The active-site Nucleophile is the Cys33. His294 serves as the catalytic Proton acceptor. Disordered regions lie at residues 387-406 (GNLA…RAEQ) and 449-558 (FHQD…LCSS). Over residues 449–461 (FHQDENIAPKANK) the composition is skewed to basic and acidic residues. Polar residues-rich tracts occupy residues 462 to 475 (ENSV…VNSG) and 545 to 558 (NGVS…LCSS).

This sequence belongs to the peptidase C19 family.

The catalysed reaction is Thiol-dependent hydrolysis of ester, thioester, amide, peptide and isopeptide bonds formed by the C-terminal Gly of ubiquitin (a 76-residue protein attached to proteins as an intracellular targeting signal).. Functionally, recognizes and hydrolyzes the peptide bond at the C-terminal Gly of ubiquitin. Involved in the processing of poly-ubiquitin precursors as well as that of ubiquitinated proteins. The sequence is that of Ubiquitin carboxyl-terminal hydrolase 25 (UBP25) from Arabidopsis thaliana (Mouse-ear cress).